Reading from the N-terminus, the 481-residue chain is 1-acylglycerol-3-phosphate O-acyltransferase PNPLA3 (481 aa).

Over 1 to 41 the chain is Cytoplasmic; sequence MYDAERGWSLSFAGCGFLGFYHVGATRCLSEHAPHLLRDAR. The region spanning 10–179 is the PNPLA domain; it reads LSFAGCGFLG…SDNVPFIDAK (170 aa). Residues 14-19 carry the GXGXXG motif; it reads GCGFLG. A helical; Signal-anchor for type II membrane protein membrane pass occupies residues 42-62; sequence MLFGASAGALHCVGVLSGIPL. The GXSXG motif lies at 45–49; it reads GASAG. Ser-47 (nucleophile) is an active-site residue. Over 63–481 the chain is Lumenal; the sequence is EQTLQVLSDL…FPSFSLEKSL (419 aa). N-linked (GlcNAc...) asparagine glycosylation is present at Asn-89. The active-site Proton acceptor is Asp-166. Residues 166–168 carry the DGA/G motif; that stretch reads DGG. The N-linked (GlcNAc...) asparagine glycan is linked to Asn-280.

The protein localises to the membrane. It localises to the lipid droplet. It catalyses the reaction a 1-acyl-sn-glycero-3-phosphate + an acyl-CoA = a 1,2-diacyl-sn-glycero-3-phosphate + CoA. It carries out the reaction a triacylglycerol + H2O = a diacylglycerol + a fatty acid + H(+). The catalysed reaction is a 1-acylglycerol + a 1,3-diacylglycerol = a triacylglycerol + glycerol. The enzyme catalyses a 1-acylglycerol + a 1,2-diacylglycerol = a triacylglycerol + glycerol. It catalyses the reaction 2 a 1-acylglycerol = a 1,2-diacylglycerol + glycerol. It carries out the reaction 1-(9Z-octadecenoyl)-sn-glycero-3-phosphate + (9Z)-octadecenoyl-CoA = 1,2-di-(9Z-octadecenoyl)-sn-glycero-3-phosphate + CoA. The catalysed reaction is 1-(9Z-octadecenoyl)-sn-glycero-3-phosphate + hexadecanoyl-CoA = 1-(9Z)-octadecenoyl-2-hexadecanoyl-sn-glycero-3-phosphate + CoA. The enzyme catalyses 1-(9Z-octadecenoyl)-sn-glycero-3-phosphate + (9Z,12Z)-octadecadienoyl-CoA = 1-(9Z)-octadecenoyl-2-(9Z,12Z)-octadecadienoyl-sn-glycero-3-phosphate + CoA. It catalyses the reaction 1-(9Z-octadecenoyl)-sn-glycero-3-phosphate + (5Z,8Z,11Z,14Z)-eicosatetraenoyl-CoA = 1-(9Z)-octadecenoyl-2-(5Z,8Z,11Z,14Z)-eicosatetraenoyl-sn-glycero-3-phosphate + CoA. It carries out the reaction 2 1-(9Z-octadecenoyl)-glycerol = 1,2-di-(9Z-octadecenoyl)-glycerol + glycerol. The catalysed reaction is 1-(9Z-octadecenoyl)-glycerol + 1,2-di-(9Z-octadecenoyl)-glycerol = 1,2,3-tri-(9Z-octadecenoyl)-glycerol + glycerol. The enzyme catalyses 1-(9Z-octadecenoyl)-glycerol + 1,3-di-(9Z-octadecenoyl)-glycerol = 1,2,3-tri-(9Z-octadecenoyl)-glycerol + glycerol. It catalyses the reaction 1,2,3-tri-(9Z-octadecenoyl)-glycerol + H2O = 1,3-di-(9Z-octadecenoyl)-glycerol + (9Z)-octadecenoate + H(+). It carries out the reaction a 1,2-diacyl-sn-glycero-3-phosphocholine + H2O = a 1-acyl-sn-glycero-3-phosphocholine + a fatty acid + H(+). The protein operates within phospholipid metabolism. It participates in glycerolipid metabolism. Its activity is regulated as follows. The triglyceride lipase activity is inhibited by BEL ((E)-6-(bromomethylene)-3-(1-naphthalenyl)-2H-tetrahydropyran-2-one), a suicide substrate inhibitor. Its function is as follows. Specifically catalyzes coenzyme A (CoA)-dependent acylation of 1-acyl-sn-glycerol 3-phosphate (2-lysophosphatidic acid/LPA) to generate phosphatidic acid (PA), an important metabolic intermediate and precursor for both triglycerides and glycerophospholipids. Does not esterify other lysophospholipids. Acyl donors are long chain (at least C16) fatty acyl-CoAs: arachidonoyl-CoA, linoleoyl-CoA, oleoyl-CoA and at a lesser extent palmitoyl-CoA. Additionally possesses low triacylglycerol lipase and CoA-independent acylglycerol transacylase activities and thus may play a role in acyl-chain remodeling of triglycerides. In vitro may express hydrolytic activity against glycerolipids triacylglycerol, diacylglycerol and monoacylglycerol, with a strong preference for oleic acid as the acyl moiety. However, the triacylglycerol hydrolase activity is controversial and may be very low. Possesses phospholipase A2 activity. The sequence is that of 1-acylglycerol-3-phosphate O-acyltransferase PNPLA3 from Homo sapiens (Human).